Consider the following 178-residue polypeptide: Acireductone dioxygenase (178 aa).

His87, His89, Glu93, and His132 together coordinate Fe(2+). 4 residues coordinate Ni(2+): His87, His89, Glu93, and His132.

The protein belongs to the acireductone dioxygenase (ARD) family. Fe(2+) serves as cofactor. Requires Ni(2+) as cofactor.

It localises to the cytoplasm. Its subcellular location is the nucleus. It catalyses the reaction 1,2-dihydroxy-5-(methylsulfanyl)pent-1-en-3-one + O2 = 4-methylsulfanyl-2-oxobutanoate + formate + 2 H(+). It carries out the reaction 1,2-dihydroxy-5-(methylsulfanyl)pent-1-en-3-one + O2 = 3-(methylsulfanyl)propanoate + CO + formate + 2 H(+). It functions in the pathway amino-acid biosynthesis; L-methionine biosynthesis via salvage pathway; L-methionine from S-methyl-5-thio-alpha-D-ribose 1-phosphate: step 5/6. Its function is as follows. Catalyzes 2 different reactions between oxygen and the acireductone 1,2-dihydroxy-3-keto-5-methylthiopentene (DHK-MTPene) depending upon the metal bound in the active site. Fe-containing acireductone dioxygenase (Fe-ARD) produces formate and 2-keto-4-methylthiobutyrate (KMTB), the alpha-ketoacid precursor of methionine in the methionine recycle pathway. Ni-containing acireductone dioxygenase (Ni-ARD) produces methylthiopropionate, carbon monoxide and formate, and does not lie on the methionine recycle pathway. The chain is Acireductone dioxygenase from Candida albicans (strain SC5314 / ATCC MYA-2876) (Yeast).